Here is a 215-residue protein sequence, read N- to C-terminus: 3-demethoxyubiquinol 3-hydroxylase (215 aa).

The Fe cation site is built by Glu-64, Glu-94, His-97, Glu-146, Glu-178, and His-181.

Belongs to the COQ7 family. The cofactor is Fe cation.

It localises to the cell membrane. The catalysed reaction is a 5-methoxy-2-methyl-3-(all-trans-polyprenyl)benzene-1,4-diol + AH2 + O2 = a 3-demethylubiquinol + A + H2O. The protein operates within cofactor biosynthesis; ubiquinone biosynthesis. In terms of biological role, catalyzes the hydroxylation of 2-nonaprenyl-3-methyl-6-methoxy-1,4-benzoquinol during ubiquinone biosynthesis. This is 3-demethoxyubiquinol 3-hydroxylase from Pseudomonas fluorescens (strain ATCC BAA-477 / NRRL B-23932 / Pf-5).